The chain runs to 493 residues: Glycerol kinase (493 aa).

Threonine 11 provides a ligand contact to ADP. Residues threonine 11, threonine 12, and serine 13 each coordinate ATP. A sn-glycerol 3-phosphate-binding site is contributed by threonine 11. ADP is bound at residue arginine 15. Residues arginine 80, glutamate 81, tyrosine 132, and aspartate 241 each coordinate sn-glycerol 3-phosphate. Positions 80, 81, 132, 241, and 242 each coordinate glycerol. Positions 263 and 306 each coordinate ADP. The ATP site is built by threonine 263, glycine 306, glutamine 310, and glycine 408. Glycine 408 serves as a coordination point for ADP.

The protein belongs to the FGGY kinase family.

It catalyses the reaction glycerol + ATP = sn-glycerol 3-phosphate + ADP + H(+). It functions in the pathway polyol metabolism; glycerol degradation via glycerol kinase pathway; sn-glycerol 3-phosphate from glycerol: step 1/1. Inhibited by fructose 1,6-bisphosphate (FBP). Key enzyme in the regulation of glycerol uptake and metabolism. Catalyzes the phosphorylation of glycerol to yield sn-glycerol 3-phosphate. The chain is Glycerol kinase from Cereibacter sphaeroides (strain ATCC 17023 / DSM 158 / JCM 6121 / CCUG 31486 / LMG 2827 / NBRC 12203 / NCIMB 8253 / ATH 2.4.1.) (Rhodobacter sphaeroides).